The following is a 258-amino-acid chain: GTP cyclohydrolase FolE2 (258 aa).

This sequence belongs to the GTP cyclohydrolase IV family.

The catalysed reaction is GTP + H2O = 7,8-dihydroneopterin 3'-triphosphate + formate + H(+). It participates in cofactor biosynthesis; 7,8-dihydroneopterin triphosphate biosynthesis; 7,8-dihydroneopterin triphosphate from GTP: step 1/1. Its function is as follows. Converts GTP to 7,8-dihydroneopterin triphosphate. This is GTP cyclohydrolase FolE2 from Pseudothermotoga lettingae (strain ATCC BAA-301 / DSM 14385 / NBRC 107922 / TMO) (Thermotoga lettingae).